The chain runs to 543 residues: Glucose-6-phosphate isomerase (543 aa).

Glu-353 serves as the catalytic Proton donor. Active-site residues include His-384 and Lys-512.

This sequence belongs to the GPI family.

The protein localises to the cytoplasm. The catalysed reaction is alpha-D-glucose 6-phosphate = beta-D-fructose 6-phosphate. The protein operates within carbohydrate biosynthesis; gluconeogenesis. It participates in carbohydrate degradation; glycolysis; D-glyceraldehyde 3-phosphate and glycerone phosphate from D-glucose: step 2/4. In terms of biological role, catalyzes the reversible isomerization of glucose-6-phosphate to fructose-6-phosphate. This chain is Glucose-6-phosphate isomerase, found in Christiangramia forsetii (strain DSM 17595 / CGMCC 1.15422 / KT0803) (Gramella forsetii).